Consider the following 229-residue polypeptide: uncharacterized protein (229 aa).

One can recognise a PilZ domain in the interval 102 to 217; that stretch reads RRRTVRVEPD…REKVRRYVFE (116 aa).

The protein to A.aeolicus aq_820 and aq_1211.

This is an uncharacterized protein from Aquifex aeolicus (strain VF5).